The sequence spans 75 residues: uncharacterized protein (75 aa).

This is an uncharacterized protein from Bovine papillomavirus type 3.